Consider the following 229-residue polypeptide: Heptaprenylglyceryl phosphate synthase (229 aa).

Lysine 12 serves as a coordination point for sn-glycerol 1-phosphate. The Mg(2+) site is built by aspartate 14 and serine 40. Residues 159-164 (YLEYSG), glycine 189, and 209-210 (GN) each bind sn-glycerol 1-phosphate.

This sequence belongs to the GGGP/HepGP synthase family. Group I subfamily. In terms of assembly, homodimer. Mg(2+) serves as cofactor.

The enzyme catalyses sn-glycerol 1-phosphate + all-trans-heptaprenyl diphosphate = 3-heptaprenyl-sn-glycero-1-phosphate + diphosphate. Its pathway is membrane lipid metabolism; glycerophospholipid metabolism. Its function is as follows. Prenyltransferase that catalyzes in vivo the transfer of the heptaprenyl moiety of heptaprenyl pyrophosphate (HepPP; 35 carbon atoms) to the C3 hydroxyl of sn-glycerol-1-phosphate (G1P), producing heptaprenylglyceryl phosphate (HepGP). This reaction is an ether-bond-formation step in the biosynthesis of archaea-type G1P-based membrane lipids found in Bacillales. In Bacillus cereus (strain ATCC 10987 / NRS 248), this protein is Heptaprenylglyceryl phosphate synthase.